The primary structure comprises 509 residues: ATP synthase subunit alpha (509 aa).

Gly-169–Thr-176 is an ATP binding site.

Belongs to the ATPase alpha/beta chains family. As to quaternary structure, F-type ATPases have 2 components, CF(1) - the catalytic core - and CF(0) - the membrane proton channel. CF(1) has five subunits: alpha(3), beta(3), gamma(1), delta(1), epsilon(1). CF(0) has three main subunits: a(1), b(2) and c(9-12). The alpha and beta chains form an alternating ring which encloses part of the gamma chain. CF(1) is attached to CF(0) by a central stalk formed by the gamma and epsilon chains, while a peripheral stalk is formed by the delta and b chains.

The protein resides in the cell inner membrane. It carries out the reaction ATP + H2O + 4 H(+)(in) = ADP + phosphate + 5 H(+)(out). In terms of biological role, produces ATP from ADP in the presence of a proton gradient across the membrane. The alpha chain is a regulatory subunit. This is ATP synthase subunit alpha from Agrobacterium fabrum (strain C58 / ATCC 33970) (Agrobacterium tumefaciens (strain C58)).